We begin with the raw amino-acid sequence, 345 residues long: N-acetyl-gamma-glutamyl-phosphate reductase (345 aa).

Cysteine 149 is a catalytic residue.

This sequence belongs to the NAGSA dehydrogenase family. Type 1 subfamily.

It localises to the cytoplasm. The catalysed reaction is N-acetyl-L-glutamate 5-semialdehyde + phosphate + NADP(+) = N-acetyl-L-glutamyl 5-phosphate + NADPH + H(+). It functions in the pathway amino-acid biosynthesis; L-arginine biosynthesis; N(2)-acetyl-L-ornithine from L-glutamate: step 3/4. Its function is as follows. Catalyzes the NADPH-dependent reduction of N-acetyl-5-glutamyl phosphate to yield N-acetyl-L-glutamate 5-semialdehyde. In Herminiimonas arsenicoxydans, this protein is N-acetyl-gamma-glutamyl-phosphate reductase.